The primary structure comprises 151 residues: Ribosome maturation factor RimP (151 aa).

Belongs to the RimP family.

Its subcellular location is the cytoplasm. In terms of biological role, required for maturation of 30S ribosomal subunits. The sequence is that of Ribosome maturation factor RimP from Vibrio parahaemolyticus serotype O3:K6 (strain RIMD 2210633).